Consider the following 424-residue polypeptide: tRNA (guanine-N(7)-)-methyltransferase non-catalytic subunit wuho (424 aa).

A disordered region spans residues 42 to 92 (LKGHTSQSQESCTAAAAASTATAASGQAPGGKEQQLANQPEEGGTSASASG). Low complexity predominate over residues 46–68 (TSQSQESCTAAAAASTATAASGQ). WD repeat units lie at residues 96–137 (ATST…ARLL), 184–223 (GHLSVVYDILWSEDQQHIITCDRDDKIRVTNYPATFDIHS), 227–265 (GHREFVSGLALLTEQHIASASGDKTLRVWNYIQGKELLQ), and 324–364 (AGSW…PASS).

It belongs to the WD repeat TRM82 family. In terms of assembly, forms a heterodimer with the catalytic subunit Mettl1. Interacts with mei-P26 and weakly interacts with bgcn; required for the function or formation of the mei-P26-bgcn-bam-sxl complex. Interacts with nanos; may be involved in mei-P26-dependent derepression of the BMP signaling pathway. Interacts with Myc; the interaction may be mediated by mei-P26 and may be involved in the regulation of ribosome biogenesis. In testis, it is present at high level in hub cells, a niche for germline stem cells of testis. Ubiquitously expressed in all testicular cells throughout spermatogenesis. Ubiquitously expressed in all germline and somatic cells of the ovary.

It localises to the nucleus. The protein localises to the cytoplasm. Its pathway is tRNA modification; N(7)-methylguanine-tRNA biosynthesis. Functionally, required for the Mettl1-dependent formation of N(7)-methylguanine at position 46 (m7G46) in tRNA. In the Mettl1-wuho methyltransferase complex, it is required to stabilize and induce conformational changes of the catalytic subunit. Required for binding of nanos mRNA and repression of translation by the mei-P26-bgcn-bam-sxl complex. May cooperate with mei-P26 and nanos to derepress the BMP signaling pathway. May cooperate with mei-P26 to suppress expression of a subset of microRNAs. May cooperate with mei-P26 to regulate bam expression levels in germline cells during gametogenesis. Required to promote mitosis to meiosis transition during gametogenesis. May regulate germline cell division in part by regulating ribosome biogenesis. This Drosophila melanogaster (Fruit fly) protein is tRNA (guanine-N(7)-)-methyltransferase non-catalytic subunit wuho.